Here is a 156-residue protein sequence, read N- to C-terminus: Arginine repressor (156 aa).

The protein belongs to the ArgR family.

It is found in the cytoplasm. It functions in the pathway amino-acid biosynthesis; L-arginine biosynthesis [regulation]. Regulates arginine biosynthesis genes. In Escherichia coli O81 (strain ED1a), this protein is Arginine repressor.